The sequence spans 419 residues: 3-isopropylmalate dehydratase large subunit (419 aa).

[4Fe-4S] cluster is bound by residues Cys300, Cys360, and Cys363.

This sequence belongs to the aconitase/IPM isomerase family. LeuC type 2 subfamily. In terms of assembly, heterodimer of LeuC and LeuD. The cofactor is [4Fe-4S] cluster.

The catalysed reaction is (2R,3S)-3-isopropylmalate = (2S)-2-isopropylmalate. It participates in amino-acid biosynthesis; L-leucine biosynthesis; L-leucine from 3-methyl-2-oxobutanoate: step 2/4. Functionally, catalyzes the isomerization between 2-isopropylmalate and 3-isopropylmalate, via the formation of 2-isopropylmaleate. The protein is 3-isopropylmalate dehydratase large subunit of Clostridium botulinum (strain Eklund 17B / Type B).